Consider the following 422-residue polypeptide: MFVRLARIPRITRHYRLGLFSTQPKPKPNEYLYYRNKHKSKMEAPIKRSSSAVSLVELEREPFKVTVIGSGNWGTTIAKVVAENTKANPQVFQERVDMWVFDENIDGTMLTEIINTKHQNVKYLPNIDLPENLVANPDLLKSVEGADILVFNIPHQFLPKIVDQLRGHVEPHVRAISCLKGFEVGKKGVQLLSTYITEELGIECGALSGANLAPEVAKEHWSETTVAYHIPKDYQGDGMDVDHKVLKLLFHRPYFHVSVIDDVAGISIAGALKNVVALGCGFVEGLGWGNNAAAAIQRVGLGEIIKFGQMFFPESRVETYYQESAGVADLITTCSGGRNVRVATHMAKTGKSAEDSEKELLNGQSAQGVITCKEVHEWLSTCEMIEEFPLFEAVYKIVYEDVPMHKLPEMIEELDDIVVAGQ.

NAD(+) contacts are provided by residues G69–G74, F157, K180, and A213. K180 serves as a coordination point for substrate. The active-site Proton acceptor is K273. Positions 338 and 367 each coordinate NAD(+). R338–N339 contacts substrate.

Belongs to the NAD-dependent glycerol-3-phosphate dehydrogenase family.

The catalysed reaction is sn-glycerol 3-phosphate + NAD(+) = dihydroxyacetone phosphate + NADH + H(+). This chain is Glycerol-3-phosphate dehydrogenase [NAD(+)] 2 (GPD2), found in Candida glabrata (strain ATCC 2001 / BCRC 20586 / JCM 3761 / NBRC 0622 / NRRL Y-65 / CBS 138) (Yeast).